The following is a 132-amino-acid chain: Small ribosomal subunit protein uS8 (132 aa).

The protein belongs to the universal ribosomal protein uS8 family. As to quaternary structure, part of the 30S ribosomal subunit. Contacts proteins S5 and S12.

Functionally, one of the primary rRNA binding proteins, it binds directly to 16S rRNA central domain where it helps coordinate assembly of the platform of the 30S subunit. This chain is Small ribosomal subunit protein uS8, found in Ehrlichia chaffeensis (strain ATCC CRL-10679 / Arkansas).